A 552-amino-acid chain; its full sequence is Putative transport protein HS_1470 (552 aa).

The next 5 helical transmembrane spans lie at 4 to 24 (IAIT…IGHW), 28 to 48 (GVGL…HFMN), 67 to 87 (LILF…ASLL), 95 to 115 (GLAT…YKVV), and 157 to 177 (MAYA…MWLI). RCK C-terminal domains follow at residues 190-275 (KQFQ…VIGE) and 277-360 (IDMP…IIGN). Helical transmembrane passes span 370-390 (MLPV…PFYI), 402-424 (AGGP…LYWF), 438-458 (IVLF…DTLV), 463-483 (LEWM…TGII), 495-515 (LCGL…ANAI), and 529-549 (VYPL…ILLW).

It belongs to the AAE transporter (TC 2.A.81) family. YidE subfamily.

Its subcellular location is the cell membrane. The sequence is that of Putative transport protein HS_1470 from Histophilus somni (strain 129Pt) (Haemophilus somnus).